Consider the following 78-residue polypeptide: Small ribosomal subunit protein bS16c (78 aa).

This sequence belongs to the bacterial ribosomal protein bS16 family.

It localises to the plastid. It is found in the chloroplast. This Phaeodactylum tricornutum (strain CCAP 1055/1) protein is Small ribosomal subunit protein bS16c.